The primary structure comprises 361 residues: UDP-N-acetylglucosamine--N-acetylmuramyl-(pentapeptide) pyrophosphoryl-undecaprenol N-acetylglucosamine transferase (361 aa).

UDP-N-acetyl-alpha-D-glucosamine is bound by residues 11–13 (TGG), asparagine 124, arginine 162, serine 193, and glutamine 292.

Belongs to the glycosyltransferase 28 family. MurG subfamily.

Its subcellular location is the cell inner membrane. The catalysed reaction is di-trans,octa-cis-undecaprenyl diphospho-N-acetyl-alpha-D-muramoyl-L-alanyl-D-glutamyl-meso-2,6-diaminopimeloyl-D-alanyl-D-alanine + UDP-N-acetyl-alpha-D-glucosamine = di-trans,octa-cis-undecaprenyl diphospho-[N-acetyl-alpha-D-glucosaminyl-(1-&gt;4)]-N-acetyl-alpha-D-muramoyl-L-alanyl-D-glutamyl-meso-2,6-diaminopimeloyl-D-alanyl-D-alanine + UDP + H(+). It participates in cell wall biogenesis; peptidoglycan biosynthesis. Its function is as follows. Cell wall formation. Catalyzes the transfer of a GlcNAc subunit on undecaprenyl-pyrophosphoryl-MurNAc-pentapeptide (lipid intermediate I) to form undecaprenyl-pyrophosphoryl-MurNAc-(pentapeptide)GlcNAc (lipid intermediate II). In Elusimicrobium minutum (strain Pei191), this protein is UDP-N-acetylglucosamine--N-acetylmuramyl-(pentapeptide) pyrophosphoryl-undecaprenol N-acetylglucosamine transferase.